The chain runs to 380 residues: Succinate--CoA ligase [ADP-forming] subunit beta 2 (380 aa).

Positions 9–235 (KQIFSKHGIR…YTEADQMERI (227 aa)) constitute an ATP-grasp domain. Residues Lys-45, 52-54 (GRG), Glu-91, Ile-94, and Glu-99 contribute to the ATP site. Residues Asn-191 and Asp-204 each coordinate Mg(2+). Residues Asn-255 and 312–314 (GIT) each bind substrate.

Belongs to the succinate/malate CoA ligase beta subunit family. In terms of assembly, heterotetramer of two alpha and two beta subunits. Mg(2+) serves as cofactor.

The enzyme catalyses succinate + ATP + CoA = succinyl-CoA + ADP + phosphate. It carries out the reaction GTP + succinate + CoA = succinyl-CoA + GDP + phosphate. Its pathway is carbohydrate metabolism; tricarboxylic acid cycle; succinate from succinyl-CoA (ligase route): step 1/1. In terms of biological role, succinyl-CoA synthetase functions in the citric acid cycle (TCA), coupling the hydrolysis of succinyl-CoA to the synthesis of either ATP or GTP and thus represents the only step of substrate-level phosphorylation in the TCA. The beta subunit provides nucleotide specificity of the enzyme and binds the substrate succinate, while the binding sites for coenzyme A and phosphate are found in the alpha subunit. In Archaeoglobus fulgidus (strain ATCC 49558 / DSM 4304 / JCM 9628 / NBRC 100126 / VC-16), this protein is Succinate--CoA ligase [ADP-forming] subunit beta 2.